A 523-amino-acid chain; its full sequence is Protein NAM8 (523 aa).

The disordered stretch occupies residues 1 to 35 (MSYKQTTYYPSRGNLVRNDSSPYTNTISSETNNSS). Low complexity predominate over residues 24–35 (TNTISSETNNSS). 3 RRM domains span residues 54 to 145 (NQLY…WATS), 163 to 242 (CSIF…PTSG), and 313 to 385 (TTVF…WGRS). The disordered stretch occupies residues 239-260 (PTSGQQQHVSGNNDYNRSSSSL). Residues 240 to 260 (TSGQQQHVSGNNDYNRSSSSL) are compositionally biased toward polar residues.

As to quaternary structure, component of the U1 small nuclear ribonucleoprotein complex (U1 snRNP).

Its function is as follows. Component of the U1 small nuclear ribonucleoprotein complex (U1 snRNP) involved in the initiation of meiotic recombination. Involved in the formation of DSBs at recombination hot-spots through meiosis-specific splicing of REC107 pre-mRNA. Collaborates with MER1 to promote splicing of essential meiotic mRNAs REC10, AMA1, MER3, HFM1, SPO22 and PCH2. NAM8 interacts with the pre-mRNA downstream of the 5' splice site, in a region of non-conserved sequence and is required for efficient splicing of uncapped RNA precursor. This Saccharomyces cerevisiae (strain ATCC 204508 / S288c) (Baker's yeast) protein is Protein NAM8.